The following is a 210-amino-acid chain: uncharacterized protein (210 aa).

4 helical membrane passes run 5-25 (LAYIPIAAMMVIIPGADTMLV), 50-70 (FWTVIAILGLSVVIAKSVILF), 75-95 (YLGAAYLIYLGVKSFFAKSMF), and 155-175 (IILASILTLLAVLWFLFLVYI).

It belongs to the Rht family.

It localises to the cell membrane. This is an uncharacterized protein from Bacillus subtilis (strain 168).